Consider the following 212-residue polypeptide: Ras-related protein Rab-15 (212 aa).

10 residues coordinate GTP: Ser-17, Gly-18, Val-19, Gly-20, Lys-21, Thr-22, Cys-23, Ser-35, Ser-39, and Thr-40. Mg(2+) is bound at residue Thr-22. 2 short sequence motifs (switch) span residues 31-45 and 63-80; these read NEFH…GVDF and DTAG…YYRR. Thr-40 and Asp-63 together coordinate Mg(2+). The GTP site is built by Gly-66, Asn-121, Lys-122, Asp-124, Ser-151, and Ala-152. S-geranylgeranyl cysteine attachment occurs at residues Cys-210 and Cys-212. The residue at position 212 (Cys-212) is a Cysteine methyl ester.

The protein belongs to the small GTPase superfamily. Rab family. The GTP bound form of RAB15 interacts with REP15. Interacts (GTP-bound form) with MICAL1, MICAL3, MICALCL, EHBP1 and EHBP1L1. The cofactor is Mg(2+). Expressed predominantly in neural tissues.

The protein resides in the cell membrane. The enzyme catalyses GTP + H2O = GDP + phosphate + H(+). Its activity is regulated as follows. Regulated by guanine nucleotide exchange factors (GEFs) which promote the exchange of bound GDP for free GTP. Regulated by GTPase activating proteins (GAPs) which increase the GTP hydrolysis activity. Inhibited by GDP dissociation inhibitors (GDIs). The small GTPases Rab are key regulators of intracellular membrane trafficking, from the formation of transport vesicles to their fusion with membranes. Rabs cycle between an inactive GDP-bound form and an active GTP-bound form that is able to recruit to membranes different sets of downstream effectors directly responsible for vesicle formation, movement, tethering and fusion. RAB15 may act in concert with RAB3A in regulating aspects of synaptic vesicle membrane flow within the nerve terminal. In Rattus norvegicus (Rat), this protein is Ras-related protein Rab-15.